Here is a 268-residue protein sequence, read N- to C-terminus: Putative carbamate hydrolase RutD (268 aa).

Residues 15-119 form the AB hydrolase-1 domain; it reads PVMVMIAGLG…VIVNGWLSLS (105 aa).

Belongs to the AB hydrolase superfamily. Hydrolase RutD family.

It carries out the reaction carbamate + 2 H(+) = NH4(+) + CO2. Functionally, involved in pyrimidine catabolism. May facilitate the hydrolysis of carbamate, a reaction that can also occur spontaneously. This is Putative carbamate hydrolase RutD from Cronobacter sakazakii (strain ATCC BAA-894) (Enterobacter sakazakii).